Consider the following 421-residue polypeptide: Gamma-glutamyl phosphate reductase (421 aa).

The protein belongs to the gamma-glutamyl phosphate reductase family.

It localises to the cytoplasm. The enzyme catalyses L-glutamate 5-semialdehyde + phosphate + NADP(+) = L-glutamyl 5-phosphate + NADPH + H(+). Its pathway is amino-acid biosynthesis; L-proline biosynthesis; L-glutamate 5-semialdehyde from L-glutamate: step 2/2. Its function is as follows. Catalyzes the NADPH-dependent reduction of L-glutamate 5-phosphate into L-glutamate 5-semialdehyde and phosphate. The product spontaneously undergoes cyclization to form 1-pyrroline-5-carboxylate. This Acinetobacter baumannii (strain ATCC 17978 / DSM 105126 / CIP 53.77 / LMG 1025 / NCDC KC755 / 5377) protein is Gamma-glutamyl phosphate reductase.